A 353-amino-acid polypeptide reads, in one-letter code: RNA 3'-terminal phosphate cyclase (353 aa).

ATP-binding positions include Gln103 and 297–301 (HLADQ). His322 serves as the catalytic Tele-AMP-histidine intermediate.

Belongs to the RNA 3'-terminal cyclase family. Type 1 subfamily.

It is found in the cytoplasm. It carries out the reaction a 3'-end 3'-phospho-ribonucleotide-RNA + ATP = a 3'-end 2',3'-cyclophospho-ribonucleotide-RNA + AMP + diphosphate. Catalyzes the conversion of 3'-phosphate to a 2',3'-cyclic phosphodiester at the end of RNA. The mechanism of action of the enzyme occurs in 3 steps: (A) adenylation of the enzyme by ATP; (B) transfer of adenylate to an RNA-N3'P to produce RNA-N3'PP5'A; (C) and attack of the adjacent 2'-hydroxyl on the 3'-phosphorus in the diester linkage to produce the cyclic end product. The biological role of this enzyme is unknown but it is likely to function in some aspects of cellular RNA processing. This is RNA 3'-terminal phosphate cyclase from Salmonella heidelberg (strain SL476).